The sequence spans 192 residues: ATP synthase protein MI25 (192 aa).

The helical transmembrane segment at 29 to 49 (ILIYNEEMIVALCFIGFIIFS) threads the bilayer.

Belongs to the ATPase protein MI25 family. F-type ATPases have 2 components, CF(1) - the catalytic core - and CF(0) - the membrane proton channel. CF(1) has five subunits: alpha(3), beta(3), gamma(1), delta(1), epsilon(1). CF(0) has three main subunits: a, b and c.

Its subcellular location is the mitochondrion membrane. This is one of the chains of the nonenzymatic component (CF(0) subunit) of the mitochondrial ATPase complex. In Arabidopsis thaliana (Mouse-ear cress), this protein is ATP synthase protein MI25 (ATP4).